We begin with the raw amino-acid sequence, 138 residues long: MRTLGLDLGTKTLGVAVSDELGLTAQGLETIAIDTERGDYGLKRLRAIIDEYGVDTIVVGWPKNMNGTLGPRAEASERFAAKLREEFSLPVVLWDERLSTMAAERMLIAADVSRKKRRKVIDKMAAAVILQSYLDSKR.

This sequence belongs to the YqgF nuclease family.

It localises to the cytoplasm. In terms of biological role, could be a nuclease involved in processing of the 5'-end of pre-16S rRNA. This Geobacillus kaustophilus (strain HTA426) protein is Putative pre-16S rRNA nuclease.